The primary structure comprises 419 residues: DNA ligase (419 aa).

Positions 1–120 (MLNQFPGQYS…ARQKRGAHTN (120 aa)) are NTD. Residues 121–317 (RGMIPPMLVK…NYHSAHLAKL (197 aa)) are AD domain. Positions 149, 151, 203, and 232 each coordinate ATP. The active-site N6-AMP-lysine intermediate is the Lys151. Residue Glu203 participates in a divalent metal cation binding. An a divalent metal cation-binding site is contributed by Glu291. Residues Ile294 and Lys316 each contribute to the ATP site. Residues 318-419 (KPLLDAEFIL…REPINVLEII (102 aa)) are OB domain.

It belongs to the ATP-dependent DNA ligase family. A divalent metal cation is required as a cofactor.

The protein resides in the virion. The catalysed reaction is ATP + (deoxyribonucleotide)n-3'-hydroxyl + 5'-phospho-(deoxyribonucleotide)m = (deoxyribonucleotide)n+m + AMP + diphosphate.. In terms of biological role, very low-fidelity DNA ligase that seals nicks in double-stranded DNA during DNA repair. Together with the viral repair DNA polymerase X, fills the single nucleotide gaps generated by the AP endonuclease. It is not essential for viral replication and recombination. Displays a very low adenylation activity towards DNA with 3'-dideoxy- or 3'-amino-terminated nicks compared to regular nick DNA. The chain is DNA ligase (LIG) from Ornithodoros (relapsing fever ticks).